Reading from the N-terminus, the 116-residue chain is Staphylococcal complement inhibitor (116 aa).

Residues 1–31 (MKIRKSILAGTLAIVLASPLVTNLDKNEAQA) form the signal peptide. Positions 62-79 (LATGSLNTYYKRTIKISG) are essential for activity.

The protein belongs to the SCIN family.

It is found in the secreted. In terms of biological role, involved in countering the first line of host defense mechanisms. Efficiently inhibits opsonization, phagocytosis and killing of S.aureus by human neutrophils. Acts by binding and stabilizing human C3 convertases (C4b2a and C3bBb), leading to their inactivation. The convertases are no longer able to cleave complement C3, therefore preventing further C3b deposition on the bacterial surface and phagocytosis of the bacterium. Also prevents C5a-induced neutrophil responses. The protein is Staphylococcal complement inhibitor (scn) of Staphylococcus aureus (strain Mu50 / ATCC 700699).